A 433-amino-acid chain; its full sequence is SPI-2 type 3 secretion system ATPase (433 aa).

165 to 170 (GVGKST) contributes to the ATP binding site.

The protein belongs to the ATPase alpha/beta chains family. T3SS ATPase subfamily. As to quaternary structure, the core secretion machinery of the T3SS is composed of approximately 20 different proteins, including cytoplasmic components, a base, an export apparatus and a needle. This subunit is part of the cytosolic complex. Forms homohexamers. Forms a complex with SsaK/SctL (stator protein) and SsaQ/SctQ (the major sorting platform component). Interacts with the T3SS-2 specific chaperones SsaE, SseA, SscA, SscB, and SrcA.

It localises to the cytoplasm. It catalyses the reaction ATP + H2O + cellular proteinSide 1 = ADP + phosphate + cellular proteinSide 2.. ATPase component of the type III secretion system (T3SS), also called injectisome, which is used to inject bacterial effector proteins into eukaryotic host cells. Acts as a molecular motor to provide the energy that is required for the export of proteins. Required for type III secretion apparatus (T3SA) formation, secretion of a subset of SPI-2 effectors and virulence. May play a critical role in T3SS substrate recognition, disassembly of the effector/chaperone complex and unfolding of the effector in an ATP-dependent manner prior to secretion. Releases the effector protein SseB from the T3SS-2 specific chaperone SsaE in an ATP-dependent manner. This is SPI-2 type 3 secretion system ATPase from Salmonella typhimurium (strain LT2 / SGSC1412 / ATCC 700720).